A 370-amino-acid polypeptide reads, in one-letter code: Vasopressin V2 receptor (370 aa).

The span at 1-10 (MLLASTTSAV) shows a compositional bias: polar residues. The segment at 1-26 (MLLASTTSAVPRTLSPPTPAGNGSRE) is disordered. At 1–37 (MLLASTTSAVPRTLSPPTPAGNGSRELLDTRDPLLVQ) the chain is on the extracellular side. The N-linked (GlcNAc...) asparagine glycan is linked to asparagine 22. The chain crosses the membrane as a helical span at residues 38-62 (AELALLSTVFVAVALSNGLVLGALA). The Cytoplasmic portion of the chain corresponds to 63-76 (RRVRRGRWAPMHVF). A helical membrane pass occupies residues 77–97 (IGHLCLADLAVALFQVLPQLA). The Extracellular portion of the chain corresponds to 98–112 (WDATDRFRGPDALCR). Residues 113-134 (AVKYLQMVGMYASSYMILAMTL) form a helical membrane-spanning segment. The Cytoplasmic portion of the chain corresponds to 135–158 (DRHRAICRPMLAYRHGGGARWNRP). A helical transmembrane segment spans residues 159–179 (VLVAWAFSLILSLPQLFIFAQ). At 180 to 199 (RDVGNGSGVLDCWAHFAEPW) the chain is on the extracellular side. A helical membrane pass occupies residues 200–219 (GLRAYVTWIALMVFVAPALG). The Cytoplasmic portion of the chain corresponds to 220–270 (IAACQVLIFREIHSSLVPGPAERAGGCRGGHRTGSPSEGARVSAAMAKTVR). Residues 271 to 292 (MTLVIVIVYVLCWAPFFLVQLW) traverse the membrane as a helical segment. Over 293–307 (AAWDPQAPLEGAPFV) the chain is Extracellular. The chain crosses the membrane as a helical span at residues 308-327 (LLMLLASLNSCTNPWIYAFF). Residues 328–370 (SSSVSSELRSLFCWARSRAPPSLGPQEESCATASSFLAKDTSS) are Cytoplasmic-facing. Cysteine 340 carries S-palmitoyl cysteine lipidation.

Belongs to the G-protein coupled receptor 1 family. Vasopressin/oxytocin receptor subfamily. As to quaternary structure, interacts with ARRDC4. Identified in a complex containing at least ARRDC4, V2R and HGS. Interacts with TMEM147.

Its subcellular location is the cell membrane. Functionally, receptor for arginine vasopressin. The activity of this receptor is mediated by G proteins which activate adenylate cyclase. Involved in renal water reabsorption. The sequence is that of Vasopressin V2 receptor (AVPR2) from Canis lupus familiaris (Dog).